The chain runs to 124 residues: NADH dehydrogenase [ubiquinone] iron-sulfur protein 6, mitochondrial (124 aa).

The transit peptide at 1 to 28 directs the protein to the mitochondrion; sequence MAAVLTFLRFLGRGGAVTRGLPGGARCF.

This sequence belongs to the complex I NDUFS6 subunit family. As to quaternary structure, mammalian complex I is composed of 45 different subunits. This is a component of the iron-sulfur (IP) fragment of the enzyme.

It localises to the mitochondrion inner membrane. Its function is as follows. Accessory subunit of the mitochondrial membrane respiratory chain NADH dehydrogenase (Complex I), that is believed not to be involved in catalysis. Complex I functions in the transfer of electrons from NADH to the respiratory chain. The immediate electron acceptor for the enzyme is believed to be ubiquinone. This Bos taurus (Bovine) protein is NADH dehydrogenase [ubiquinone] iron-sulfur protein 6, mitochondrial (NDUFS6).